The primary structure comprises 98 residues: Integration host factor subunit alpha (98 aa).

The tract at residues 54–74 (LRDKASRPGRNPKTGENIPVS) is disordered.

Belongs to the bacterial histone-like protein family. As to quaternary structure, heterodimer of an alpha and a beta chain.

Its function is as follows. This protein is one of the two subunits of integration host factor, a specific DNA-binding protein that functions in genetic recombination as well as in transcriptional and translational control. The sequence is that of Integration host factor subunit alpha from Actinobacillus succinogenes (strain ATCC 55618 / DSM 22257 / CCUG 43843 / 130Z).